Here is a 365-residue protein sequence, read N- to C-terminus: Peptide chain release factor 2 (365 aa).

Position 251 is an N5-methylglutamine (Gln251).

This sequence belongs to the prokaryotic/mitochondrial release factor family. Methylated by PrmC. Methylation increases the termination efficiency of RF2.

It is found in the cytoplasm. Functionally, peptide chain release factor 2 directs the termination of translation in response to the peptide chain termination codons UGA and UAA. The protein is Peptide chain release factor 2 of Campylobacter jejuni (strain RM1221).